A 284-amino-acid polypeptide reads, in one-letter code: NAD/NADP-dependent indole-3-acetaldehyde reductase (284 aa).

An NADPH-binding site is contributed by D49. Active-site proton donor residues include Y54 and H109. The NADPH site is built by S143, Q165, L196, R201, T239, T240, T241, S242, K243, and R246.

This sequence belongs to the aldo/keto reductase family. Monomer.

It localises to the cytoplasm. Its subcellular location is the nucleus. It carries out the reaction indole-3-ethanol + NAD(+) = indole-3-acetaldehyde + NADH + H(+). The catalysed reaction is indole-3-ethanol + NADP(+) = indole-3-acetaldehyde + NADPH + H(+). This is NAD/NADP-dependent indole-3-acetaldehyde reductase from Schizosaccharomyces pombe (strain 972 / ATCC 24843) (Fission yeast).